The chain runs to 427 residues: Glutamate-1-semialdehyde 2,1-aminomutase (427 aa).

At lysine 265 the chain carries N6-(pyridoxal phosphate)lysine.

The protein belongs to the class-III pyridoxal-phosphate-dependent aminotransferase family. HemL subfamily. Homodimer. The cofactor is pyridoxal 5'-phosphate.

It localises to the cytoplasm. The enzyme catalyses (S)-4-amino-5-oxopentanoate = 5-aminolevulinate. Its pathway is porphyrin-containing compound metabolism; protoporphyrin-IX biosynthesis; 5-aminolevulinate from L-glutamyl-tRNA(Glu): step 2/2. This chain is Glutamate-1-semialdehyde 2,1-aminomutase, found in Burkholderia thailandensis (strain ATCC 700388 / DSM 13276 / CCUG 48851 / CIP 106301 / E264).